Consider the following 180-residue polypeptide: ATP-dependent protease subunit HslV (180 aa).

Thr7 is a catalytic residue. 3 residues coordinate Na(+): Ala162, Cys165, and Thr168.

The protein belongs to the peptidase T1B family. HslV subfamily. As to quaternary structure, a double ring-shaped homohexamer of HslV is capped on each side by a ring-shaped HslU homohexamer. The assembly of the HslU/HslV complex is dependent on binding of ATP.

Its subcellular location is the cytoplasm. It carries out the reaction ATP-dependent cleavage of peptide bonds with broad specificity.. With respect to regulation, allosterically activated by HslU binding. Its function is as follows. Protease subunit of a proteasome-like degradation complex believed to be a general protein degrading machinery. This is ATP-dependent protease subunit HslV from Dichelobacter nodosus (strain VCS1703A).